The chain runs to 359 residues: Fe-S cluster assembly protein DRE2 (359 aa).

Positions 1-159 (MANILLLLHP…LFKKLSSNSN (159 aa)) are N-terminal SAM-like domain. The segment at 152–187 (KKLSSNSNNNNNSSSPIGLTDSSAANTDEETDEANV) is disordered. A compositionally biased stretch (low complexity) spans 155-166 (SSNSNNNNNSSS). Positions 159 to 228 (NNNNNSSSPI…DDLIKDSNQL (70 aa)) are linker. Positions 167–177 (PIGLTDSSAAN) are enriched in polar residues. [2Fe-2S] cluster is bound by residues cysteine 240, cysteine 252, cysteine 255, and cysteine 257. The segment at 240-257 (CEIPNGKKRRKACKDCTC) is fe-S binding site A. Positions 322, 325, 333, and 336 each coordinate [4Fe-4S] cluster. 2 consecutive short sequence motifs (cx2C motif) follow at residues 322–325 (CGSC) and 333–336 (CDGC). Residues 322–336 (CGSCALGDAFRCDGC) are fe-S binding site B.

It belongs to the anamorsin family. As to quaternary structure, monomer. Interacts with TAH18. Interacts with MIA40. [2Fe-2S] cluster is required as a cofactor. Requires [4Fe-4S] cluster as cofactor.

The protein resides in the cytoplasm. Its subcellular location is the mitochondrion intermembrane space. In terms of biological role, component of the cytosolic iron-sulfur (Fe-S) protein assembly (CIA) machinery required for the maturation of extramitochondrial Fe-S proteins. Part of an electron transfer chain functioning in an early step of cytosolic Fe-S biogenesis, facilitating the de novo assembly of a [4Fe-4S] cluster on the scaffold complex CFD1-NBP35. Electrons are transferred to DRE2 from NADPH via the FAD- and FMN-containing protein TAH18. TAH18-DRE2 are also required for the assembly of the diferric tyrosyl radical cofactor of ribonucleotide reductase (RNR), probably by providing electrons for reduction during radical cofactor maturation in the catalytic small subunit RNR2. The chain is Fe-S cluster assembly protein DRE2 from Scheffersomyces stipitis (strain ATCC 58785 / CBS 6054 / NBRC 10063 / NRRL Y-11545) (Yeast).